Consider the following 177-residue polypeptide: von Ebner gland protein 1 (177 aa).

Residues 1–18 (MKALLLTFGLSLLAALQA) form the signal peptide. An intrachain disulfide couples Cys-80 to Cys-172.

It belongs to the calycin superfamily. Lipocalin family. In terms of assembly, homodimer.

It localises to the secreted. Functionally, could play a role in taste reception. Could be necessary for the concentration and delivery of sapid molecules in the gustatory system. This Rattus norvegicus (Rat) protein is von Ebner gland protein 1 (Vegp1).